The following is a 265-amino-acid chain: MQIRQSIKLKKPLIHYITNPISINDCANIILAAGAKPIMAEHPLEVSEITSVSKSLGVNLGNITDNKMKSMLISGKTAYENKIPQVIDLVGVGCSKLRLDYAKKFISECHPNVIKGNMSEIKAIYGIKSSAKGIDVGACDIITKQNFDENIEMIKRLSMETGSVVAATGVVDIISNGTYTYIISNGCEMLSMITGTGCMLTGLIASYISSENILDGTVLAVALMGICGELSQHAKGTGSFRNELTDNMFSISDDIIIKKIRINSY.

A substrate-binding site is contributed by M39. ATP contacts are provided by K115 and T168. G195 is a binding site for substrate.

It belongs to the Thz kinase family. It depends on Mg(2+) as a cofactor.

It catalyses the reaction 5-(2-hydroxyethyl)-4-methylthiazole + ATP = 4-methyl-5-(2-phosphooxyethyl)-thiazole + ADP + H(+). It participates in cofactor biosynthesis; thiamine diphosphate biosynthesis; 4-methyl-5-(2-phosphoethyl)-thiazole from 5-(2-hydroxyethyl)-4-methylthiazole: step 1/1. In terms of biological role, catalyzes the phosphorylation of the hydroxyl group of 4-methyl-5-beta-hydroxyethylthiazole (THZ). The polypeptide is Hydroxyethylthiazole kinase 2 (Clostridium botulinum (strain ATCC 19397 / Type A)).